Here is a 376-residue protein sequence, read N- to C-terminus: Uroporphyrinogen decarboxylase (376 aa).

Substrate-binding positions include 29–33, D79, Y155, S210, and H342; that span reads RQAGR.

This sequence belongs to the uroporphyrinogen decarboxylase family. As to quaternary structure, homodimer.

It is found in the cytoplasm. It carries out the reaction uroporphyrinogen III + 4 H(+) = coproporphyrinogen III + 4 CO2. It participates in porphyrin-containing compound metabolism; protoporphyrin-IX biosynthesis; coproporphyrinogen-III from 5-aminolevulinate: step 4/4. Catalyzes the decarboxylation of four acetate groups of uroporphyrinogen-III to yield coproporphyrinogen-III. This chain is Uroporphyrinogen decarboxylase, found in Paracidovorax citrulli (strain AAC00-1) (Acidovorax citrulli).